Here is a 316-residue protein sequence, read N- to C-terminus: Ecto-ADP-ribosyltransferase 5 (316 aa).

The N-terminal stretch at 1 to 23 is a signal peptide; sequence MIQATLLISLSCLSFYTLGSGVR. An intrachain disulfide couples Cys-50 to Cys-266. N-linked (GlcNAc...) asparagine glycosylation is present at Asn-68. One can recognise a TR mART core domain in the interval 70–261; sequence TRLRESWETA…MTLSSSDQMC (192 aa). Tyr-107 provides a ligand contact to NAD(+). An N-linked (GlcNAc...) asparagine glycan is attached at Asn-109. Residues Arg-168 and Gln-188 each coordinate NAD(+). The active site involves Arg-168. The active site involves Ser-191. Ser-222 is a binding site for NAD(+). Residue Glu-229 is part of the active site. Asn-242 and Asn-248 each carry an N-linked (GlcNAc...) asparagine glycan.

Belongs to the Arg-specific ADP-ribosyltransferase family.

It is found in the secreted. The protein resides in the membrane. The catalysed reaction is L-arginyl-[protein] + NAD(+) = N(omega)-(ADP-D-ribosyl)-L-arginyl-[protein] + nicotinamide + H(+). In Bos taurus (Bovine), this protein is Ecto-ADP-ribosyltransferase 5 (ART5).